A 403-amino-acid polypeptide reads, in one-letter code: Aspartate aminotransferase, cytoplasmic isozyme 2 (403 aa).

Met-1 carries the post-translational modification N-acetylmethionine. Positions 37, 132, and 185 each coordinate L-aspartate. N6-(pyridoxal phosphate)lysine is present on Lys-249. Arg-377 is a binding site for L-aspartate.

It belongs to the class-I pyridoxal-phosphate-dependent aminotransferase family. As to quaternary structure, homodimer. The cofactor is pyridoxal 5'-phosphate.

The protein resides in the cytoplasm. It carries out the reaction L-aspartate + 2-oxoglutarate = oxaloacetate + L-glutamate. Important for the metabolism of amino acids and Krebs-cycle related organic acids. In plants, it is involved in nitrogen metabolism and in aspects of carbon and energy metabolism. This Arabidopsis thaliana (Mouse-ear cress) protein is Aspartate aminotransferase, cytoplasmic isozyme 2 (ASP4).